The chain runs to 286 residues: Bifunctional protein FolD (286 aa).

NADP(+) contacts are provided by residues 165–167 (GRS) and S190.

The protein belongs to the tetrahydrofolate dehydrogenase/cyclohydrolase family. Homodimer.

It catalyses the reaction (6R)-5,10-methylene-5,6,7,8-tetrahydrofolate + NADP(+) = (6R)-5,10-methenyltetrahydrofolate + NADPH. The enzyme catalyses (6R)-5,10-methenyltetrahydrofolate + H2O = (6R)-10-formyltetrahydrofolate + H(+). The protein operates within one-carbon metabolism; tetrahydrofolate interconversion. Functionally, catalyzes the oxidation of 5,10-methylenetetrahydrofolate to 5,10-methenyltetrahydrofolate and then the hydrolysis of 5,10-methenyltetrahydrofolate to 10-formyltetrahydrofolate. The protein is Bifunctional protein FolD of Burkholderia cenocepacia (strain ATCC BAA-245 / DSM 16553 / LMG 16656 / NCTC 13227 / J2315 / CF5610) (Burkholderia cepacia (strain J2315)).